A 208-amino-acid polypeptide reads, in one-letter code: Thymidylate kinase (208 aa).

10–17 is an ATP binding site; the sequence is GLEGAGKS.

Belongs to the thymidylate kinase family.

It catalyses the reaction dTMP + ATP = dTDP + ADP. Its function is as follows. Phosphorylation of dTMP to form dTDP in both de novo and salvage pathways of dTTP synthesis. The sequence is that of Thymidylate kinase from Pseudoalteromonas translucida (strain TAC 125).